Here is a 488-residue protein sequence, read N- to C-terminus: Envelope glycoprotein gp62 (488 aa).

The signal sequence occupies residues 1-20; sequence MGKFLATLILFFQFCPLILG. Residues 21-442 are Extracellular-facing; that stretch reads DYSPSCCTLT…LGLSQWAREA (422 aa). Residues Asn140 and Asn222 are each glycosylated (N-linked (GlcNAc...) asparagine; by host). The short motif at 225–228 is the CXXC element; sequence CIVC. 3 disulfides stabilise this stretch: Cys225/Cys228, Cys225/Cys401, and Cys393/Cys400. Residues Asn244 and Asn272 are each glycosylated (N-linked (GlcNAc...) asparagine; by host). Positions 313 to 333 are fusion peptide; sequence AVPVAVWLVSALAMGAGVAGR. Coiled-coil stretches lie at residues 341-387 and 397-429; these read ASGK…LLFW and QEQC…GWGL. An immunosuppression region spans residues 376–392; the sequence is AQNRRGLDLLFWEQGGL. Residues 393-401 carry the CX6CC motif; it reads CKALQEQCC. Asn404 is a glycosylation site (N-linked (GlcNAc...) asparagine; by host). The chain crosses the membrane as a helical span at residues 443 to 463; that stretch reads LQTGITLVALLLLVILAGPCI. Cys462 carries S-palmitoyl cysteine; by host lipidation. The Cytoplasmic segment spans residues 464–488; sequence LRQLRHLPSRVRYPHYSLINPESSL.

The mature envelope protein (Env) consists of a trimer of SU-TM heterodimers attached by a labile interchain disulfide bond. In terms of processing, specific enzymatic cleavages in vivo yield mature proteins. Envelope glycoproteins are synthesized as an inactive precursor that is N-glycosylated and processed likely by host cell furin or by a furin-like protease in the Golgi to yield the mature SU and TM proteins. The cleavage site between SU and TM requires the minimal sequence [KR]-X-[KR]-R. The CXXC motif is highly conserved across a broad range of retroviral envelope proteins. It is thought to participate in the formation of a labile disulfide bond possibly with the CX6CC motif present in the transmembrane protein. Isomerization of the intersubunit disulfide bond to an SU intrachain disulfide bond is thought to occur upon receptor recognition in order to allow membrane fusion. Post-translationally, the transmembrane protein is palmitoylated.

It localises to the virion membrane. The protein localises to the host cell membrane. Its function is as follows. The surface protein (SU) attaches the virus to the host cell by binding to its receptor. This interaction triggers the refolding of the transmembrane protein (TM) and is thought to activate its fusogenic potential by unmasking its fusion peptide. Fusion occurs at the host cell plasma membrane. The transmembrane protein (TM) acts as a class I viral fusion protein. Under the current model, the protein has at least 3 conformational states: pre-fusion native state, pre-hairpin intermediate state, and post-fusion hairpin state. During viral and target cell membrane fusion, the coiled coil regions (heptad repeats) assume a trimer-of-hairpins structure, positioning the fusion peptide in close proximity to the C-terminal region of the ectodomain. The formation of this structure appears to drive apposition and subsequent fusion of viral and target cell membranes. Membranes fusion leads to delivery of the nucleocapsid into the cytoplasm. This Homo sapiens (Human) protein is Envelope glycoprotein gp62 (env).